Reading from the N-terminus, the 423-residue chain is Imidazolonepropionase (423 aa).

Residues histidine 78 and histidine 80 each coordinate Fe(3+). Residues histidine 78 and histidine 80 each coordinate Zn(2+). 4-imidazolone-5-propanoate-binding residues include arginine 87, tyrosine 150, and histidine 183. Tyrosine 150 serves as a coordination point for N-formimidoyl-L-glutamate. Histidine 247 provides a ligand contact to Fe(3+). Histidine 247 provides a ligand contact to Zn(2+). Glutamate 250 contributes to the 4-imidazolone-5-propanoate binding site. Aspartate 322 lines the Fe(3+) pocket. Aspartate 322 contributes to the Zn(2+) binding site. Residues asparagine 324 and glycine 326 each coordinate N-formimidoyl-L-glutamate. Position 327 (serine 327) interacts with 4-imidazolone-5-propanoate.

This sequence belongs to the metallo-dependent hydrolases superfamily. HutI family. Zn(2+) is required as a cofactor. Fe(3+) serves as cofactor.

The protein localises to the cytoplasm. It catalyses the reaction 4-imidazolone-5-propanoate + H2O = N-formimidoyl-L-glutamate. It functions in the pathway amino-acid degradation; L-histidine degradation into L-glutamate; N-formimidoyl-L-glutamate from L-histidine: step 3/3. Functionally, catalyzes the hydrolytic cleavage of the carbon-nitrogen bond in imidazolone-5-propanoate to yield N-formimidoyl-L-glutamate. It is the third step in the universal histidine degradation pathway. The protein is Imidazolonepropionase of Bacillus mycoides (strain KBAB4) (Bacillus weihenstephanensis).